A 266-amino-acid polypeptide reads, in one-letter code: Shikimate dehydrogenase (NADP(+)) (266 aa).

Shikimate is bound by residues 16–18 (SKS) and Thr65. Residue Lys69 is the Proton acceptor of the active site. Asn90 and Asp105 together coordinate shikimate. Residues 128–132 (GAGGS) and Leu211 each bind NADP(+). Shikimate is bound at residue Tyr213. Gly233 is a binding site for NADP(+).

The protein belongs to the shikimate dehydrogenase family. Homodimer.

The catalysed reaction is shikimate + NADP(+) = 3-dehydroshikimate + NADPH + H(+). Its pathway is metabolic intermediate biosynthesis; chorismate biosynthesis; chorismate from D-erythrose 4-phosphate and phosphoenolpyruvate: step 4/7. Its function is as follows. Involved in the biosynthesis of the chorismate, which leads to the biosynthesis of aromatic amino acids. Catalyzes the reversible NADPH linked reduction of 3-dehydroshikimate (DHSA) to yield shikimate (SA). This is Shikimate dehydrogenase (NADP(+)) from Helicobacter pylori (strain J99 / ATCC 700824) (Campylobacter pylori J99).